The sequence spans 162 residues: MGLETEKADVQLFMDDDSYSHHSGLEYADPEKFVDSGQDRDPHRLNSHLKLGFEDVIAEPVTTHSFDKVWICSHALFEISKYVMYKFLTVFLAIPLAFLAGILFATLSCLHIWIIMPFVKTCLMVLPSVQTIWKSVTDAIIAPLCTSIGRSFSSVSLQLSQD.

The Cytoplasmic portion of the chain corresponds to 1–86 (MGLETEKADV…FEISKYVMYK (86 aa)). Tyr-19 bears the Phosphotyrosine; by SRC mark. 2 positions are modified to phosphoserine: Ser-20 and Ser-23. Residue Tyr-27 is modified to Phosphotyrosine; by SRC. The residue at position 36 (Ser-36) is a Phosphoserine. Residues 87–107 (FLTVFLAIPLAFLAGILFATL) constitute an intramembrane region (helical). Over 108–162 (SCLHIWIIMPFVKTCLMVLPSVQTIWKSVTDAIIAPLCTSIGRSFSSVSLQLSQD) the chain is Cytoplasmic.

The protein belongs to the caveolin family. Monomer or homodimer. Interacts with CAV1; the interaction forms a stable heterooligomeric complex that is required for targeting to lipid rafts and for caveolae formation. Tyrosine phosphorylated forms do not form heterooligomers with the Tyr-19-phosphorylated form existing as a monomer or dimer, and the Tyr-27-form as a monomer only. Interacts (tyrosine phosphorylated form) with the SH2 domain-containing proteins, RASA1, NCK1 and SRC. Interacts (tyrosine phosphorylated form) with INSR, the interaction (Tyr-27-phosphorylated form) is increased on insulin stimulation. Interacts (Tyr-19 phosphorylated form) with MAPK1 (phosphorylated form); the interaction, promoted by insulin, leads to nuclear location and MAPK1 activation. Interacts with STAT3; the interaction is increased on insulin-induced tyrosine phosphorylation leading to STAT activation. Phosphorylated on serine and tyrosine residues. CAV1 promotes phosphorylation on Ser-23 which then targets the complex to the plasma membrane, lipid rafts and caveolae. Phosphorylation on Ser-36 appears to modulate mitosis in endothelial cells. Phosphorylation on both Tyr-19 and Tyr-27 is required for insulin-induced 'Ser-727' phosphorylation of STAT3 and its activation. Phosphorylation on Tyr-19 is required for insulin-induced phosphorylation of MAPK1 and DNA binding of STAT3. Tyrosine phosphorylation is induced by both EGF and insulin (By. similarity).

The protein resides in the nucleus. It is found in the cytoplasm. The protein localises to the golgi apparatus membrane. It localises to the cell membrane. Its subcellular location is the membrane. The protein resides in the caveola. In terms of biological role, may act as a scaffolding protein within caveolar membranes. Interacts directly with G-protein alpha subunits and can functionally regulate their activity. Acts as an accessory protein in conjunction with CAV1 in targeting to lipid rafts and driving caveolae formation. The Ser-36 phosphorylated form has a role in modulating mitosis in endothelial cells. Positive regulator of cellular mitogenesis of the MAPK signaling pathway. Required for the insulin-stimulated nuclear translocation and activation of MAPK1 and STAT3, and the subsequent regulation of cell cycle progression. This chain is Caveolin-2 (CAV2), found in Callithrix jacchus (White-tufted-ear marmoset).